We begin with the raw amino-acid sequence, 768 residues long: Probable dipeptidyl peptidase 4 (768 aa).

The signal sequence occupies residues 1 to 17 (MKLGKWSVLLLVGCTAA). Residues Asn38, Asn81, Asn104, Asn113, Asn221, Asn282, and Asn468 are each glycosylated (N-linked (GlcNAc...) asparagine). Ser616 acts as the Charge relay system in catalysis. N-linked (GlcNAc...) asparagine glycosylation is present at Asn668. Residues Asp693 and His728 each act as charge relay system in the active site.

Belongs to the peptidase S9B family.

The protein resides in the secreted. The enzyme catalyses Release of an N-terminal dipeptide, Xaa-Yaa-|-Zaa-, from a polypeptide, preferentially when Yaa is Pro, provided Zaa is neither Pro nor hydroxyproline.. Extracellular dipeptidyl-peptidase which removes N-terminal dipeptides sequentially from polypeptides having unsubstituted N-termini provided that the penultimate residue is proline. This Aspergillus clavatus (strain ATCC 1007 / CBS 513.65 / DSM 816 / NCTC 3887 / NRRL 1 / QM 1276 / 107) protein is Probable dipeptidyl peptidase 4 (dpp4).